The primary structure comprises 269 residues: Phosphate import ATP-binding protein PstB 2 (269 aa).

Residues 23-264 (LEVKDLSIYY…PKKQKTEDYI (242 aa)) form the ABC transporter domain. 55–62 (GPSGCGKS) is a binding site for ATP.

It belongs to the ABC transporter superfamily. Phosphate importer (TC 3.A.1.7) family. In terms of assembly, the complex is composed of two ATP-binding proteins (PstB), two transmembrane proteins (PstC and PstA) and a solute-binding protein (PstS).

The protein resides in the cell membrane. It catalyses the reaction phosphate(out) + ATP + H2O = ADP + 2 phosphate(in) + H(+). Functionally, part of the ABC transporter complex PstSACB involved in phosphate import. Responsible for energy coupling to the transport system. This is Phosphate import ATP-binding protein PstB 2 from Bacillus subtilis (strain 168).